A 219-amino-acid polypeptide reads, in one-letter code: Probable glutathione S-transferase MSR-1 (219 aa).

The region spanning 4–83 (NNVVLLDFSG…YIDEVWHEKC (80 aa)) is the GST N-terminal domain. Residues S14, K41, I55, and 67–68 (ES) contribute to the glutathione site. A GST C-terminal domain is found at 89 to 208 (DPYQRSQARF…LPHPHKIYDF (120 aa)).

This sequence belongs to the GST superfamily. HSP26 family.

The catalysed reaction is RX + glutathione = an S-substituted glutathione + a halide anion + H(+). In terms of biological role, may play an important role in hormonal and growth regulatory responses. This chain is Probable glutathione S-transferase MSR-1 (MSR-1), found in Nicotiana plumbaginifolia (Leadwort-leaved tobacco).